We begin with the raw amino-acid sequence, 92 residues long: Small ribosomal subunit protein uS19c (92 aa).

Belongs to the universal ribosomal protein uS19 family.

Its subcellular location is the plastid. It localises to the chloroplast. Functionally, protein S19 forms a complex with S13 that binds strongly to the 16S ribosomal RNA. This Vitis vinifera (Grape) protein is Small ribosomal subunit protein uS19c.